A 411-amino-acid chain; its full sequence is MSTATLSQETKQIVKATVPILAEHGEAITKHFYKRMFSHHPELLNIFNQTHQKQGRQPQALANSIYAAAEHIDNLEAILPVVSRIAHKHRSLNIKPEQYPIVGENLLAAMREVLGDAASDDVLEAWREAYELIADVFIQVEKKMYEEASQAPGGWREFRSFVVEKKQRESATITSFYLKPEDGKALASYKPGQYITVKVTIPGHEHTHMRQYSLSDAPEKGYYRITVKREEGDGDLPPGIVSNYLHQHIHEGDVLEITAPAGDFTLQEEGERPIVFISGGVGITPLMSMFNTLMQRGVKREVIFIHAAINGFYHAMHDHLAQTASQQENVHYAVCYERPTPGDRMNPFMKKEGFIDESFLRSILHDREADFYFCGPVPFMKTIAQILKDWDVPEQQVHYEFFGPAGTLASS.

The Globin domain maps to 5-142 (TLSQETKQIV…IADVFIQVEK (138 aa)). His89 contributes to the heme b binding site. Active-site charge relay system residues include Tyr99 and Glu141. The interval 153–411 (GGWREFRSFV…FGPAGTLASS (259 aa)) is reductase. The FAD-binding FR-type domain maps to 156-267 (REFRSFVVEK…TAPAGDFTLQ (112 aa)). FAD is bound by residues Tyr194 and 210-213 (RQYS). 280–285 (GVGITP) contributes to the NADP(+) binding site. FAD is bound at residue 401 to 404 (FFGP).

It belongs to the globin family. Two-domain flavohemoproteins subfamily. In the C-terminal section; belongs to the flavoprotein pyridine nucleotide cytochrome reductase family. Heme b is required as a cofactor. Requires FAD as cofactor.

It carries out the reaction 2 nitric oxide + NADPH + 2 O2 = 2 nitrate + NADP(+) + H(+). The catalysed reaction is 2 nitric oxide + NADH + 2 O2 = 2 nitrate + NAD(+) + H(+). Functionally, is involved in NO detoxification in an aerobic process, termed nitric oxide dioxygenase (NOD) reaction that utilizes O(2) and NAD(P)H to convert NO to nitrate, which protects the bacterium from various noxious nitrogen compounds. Therefore, plays a central role in the inducible response to nitrosative stress. The sequence is that of Flavohemoprotein from Halalkalibacterium halodurans (strain ATCC BAA-125 / DSM 18197 / FERM 7344 / JCM 9153 / C-125) (Bacillus halodurans).